A 184-amino-acid chain; its full sequence is ATP synthase subunit b, chloroplastic (184 aa).

Residues 27-49 (LATNPINLSVVLGVLIFFGKGVL) traverse the membrane as a helical segment.

This sequence belongs to the ATPase B chain family. As to quaternary structure, F-type ATPases have 2 components, F(1) - the catalytic core - and F(0) - the membrane proton channel. F(1) has five subunits: alpha(3), beta(3), gamma(1), delta(1), epsilon(1). F(0) has four main subunits: a(1), b(1), b'(1) and c(10-14). The alpha and beta chains form an alternating ring which encloses part of the gamma chain. F(1) is attached to F(0) by a central stalk formed by the gamma and epsilon chains, while a peripheral stalk is formed by the delta, b and b' chains.

It is found in the plastid. It localises to the chloroplast thylakoid membrane. Its function is as follows. F(1)F(0) ATP synthase produces ATP from ADP in the presence of a proton or sodium gradient. F-type ATPases consist of two structural domains, F(1) containing the extramembraneous catalytic core and F(0) containing the membrane proton channel, linked together by a central stalk and a peripheral stalk. During catalysis, ATP synthesis in the catalytic domain of F(1) is coupled via a rotary mechanism of the central stalk subunits to proton translocation. Component of the F(0) channel, it forms part of the peripheral stalk, linking F(1) to F(0). The polypeptide is ATP synthase subunit b, chloroplastic (Lepidium virginicum (Virginia pepperweed)).